A 337-amino-acid polypeptide reads, in one-letter code: uncharacterized protein (337 aa).

The 55-residue stretch at 22–76 (PFRLLSLPTLALKNVLLHIDFIDLLELSLASKKCEIYMKTCCLKIDSLHFHFRRI) folds into the F-box domain.

This is an uncharacterized protein from Caenorhabditis elegans.